A 181-amino-acid chain; its full sequence is UPF0232 protein MAP_0004 (181 aa).

A compositionally biased stretch (polar residues) spans 1–11; sequence MSDDQSPSPSG. Disordered stretches follow at residues 1–70 and 161–181; these read MSDD…PQPL and APSWRKGPRHIAGRGPRDTYG. Residues 18–39 show a composition bias toward basic and acidic residues; that stretch reads LVRRTLEEARAAARAQGKDAGR. Residues 40–50 show a composition bias toward low complexity; that stretch reads GRAAAPTPRRV.

Belongs to the UPF0232 family.

The polypeptide is UPF0232 protein MAP_0004 (Mycolicibacterium paratuberculosis (strain ATCC BAA-968 / K-10) (Mycobacterium paratuberculosis)).